Consider the following 238-residue polypeptide: Large ribosomal subunit protein uL1 (238 aa).

The segment at 217–238 (TNGPGVPVDETIQKNYADDAEA) is disordered.

This sequence belongs to the universal ribosomal protein uL1 family. In terms of assembly, part of the 50S ribosomal subunit.

Binds directly to 23S rRNA. The L1 stalk is quite mobile in the ribosome, and is involved in E site tRNA release. In terms of biological role, protein L1 is also a translational repressor protein, it controls the translation of the L11 operon by binding to its mRNA. The polypeptide is Large ribosomal subunit protein uL1 (Corynebacterium urealyticum (strain ATCC 43042 / DSM 7109)).